Here is a 180-residue protein sequence, read N- to C-terminus: Thioredoxin 3 (180 aa).

Residues 1–3 are Cytoplasmic-facing; that stretch reads MAL. Residues 4-24 traverse the membrane as a helical; Signal-anchor for type II membrane protein segment; the sequence is ICIGSVCFSLFHIGVIILLII. The Lumenal segment spans residues 25 to 180; that stretch reads NYFSSHIKKI…FQKYCLEKAK (156 aa). One can recognise a Thioredoxin domain in the interval 29-176; that stretch reads SHIKKIFPSF…IEKAFQKYCL (148 aa). Residues Cys-99 and Cys-102 each act as nucleophile in the active site. Residues Cys-99 and Cys-102 are joined by a disulfide bond.

The protein belongs to the thioredoxin family. In terms of processing, the disulfide bond between Cys-99 and Cys-102 acts as a redox-active center and is reduced by thioredoxin reductase TRXR.

The protein localises to the endoplasmic reticulum membrane. In terms of biological role, participates in various redox reactions through the reversible oxidation of its active center dithiol to a disulfide and catalyzes dithiol-disulfide exchange reactions. This chain is Thioredoxin 3, found in Plasmodium falciparum (isolate 3D7).